Here is a 75-residue protein sequence, read N- to C-terminus: ATP synthase subunit c (75 aa).

2 helical membrane passes run Leu-13–Ile-33 and Met-54–Ile-74.

Belongs to the ATPase C chain family. In terms of assembly, F-type ATPases have 2 components, F(1) - the catalytic core - and F(0) - the membrane proton channel. F(1) has five subunits: alpha(3), beta(3), gamma(1), delta(1), epsilon(1). F(0) has three main subunits: a(1), b(2) and c(10-14). The alpha and beta chains form an alternating ring which encloses part of the gamma chain. F(1) is attached to F(0) by a central stalk formed by the gamma and epsilon chains, while a peripheral stalk is formed by the delta and b chains.

The protein resides in the cell membrane. Functionally, f(1)F(0) ATP synthase produces ATP from ADP in the presence of a proton or sodium gradient. F-type ATPases consist of two structural domains, F(1) containing the extramembraneous catalytic core and F(0) containing the membrane proton channel, linked together by a central stalk and a peripheral stalk. During catalysis, ATP synthesis in the catalytic domain of F(1) is coupled via a rotary mechanism of the central stalk subunits to proton translocation. Key component of the F(0) channel; it plays a direct role in translocation across the membrane. A homomeric c-ring of between 10-14 subunits forms the central stalk rotor element with the F(1) delta and epsilon subunits. The chain is ATP synthase subunit c from Bifidobacterium adolescentis (strain ATCC 15703 / DSM 20083 / NCTC 11814 / E194a).